The chain runs to 268 residues: WUSCHEL-related homeobox 12 (268 aa).

Polar residues predominate over residues 1–16; it reads MNQEGASHSPSSTSTE. Disordered stretches follow at residues 1–22 and 173–198; these read MNQE…RARW and SDHN…QNSN. The homeobox; WUS-type DNA-binding region spans 17–81; that stretch reads PVRARWSPKP…NRRSRSRRRH (65 aa).

This sequence belongs to the WUS homeobox family.

It is found in the nucleus. Transcription factor which may be involved in developmental processes. The protein is WUSCHEL-related homeobox 12 (WOX12) of Arabidopsis thaliana (Mouse-ear cress).